Here is a 35-residue protein sequence, read N- to C-terminus: Photosystem II reaction center protein M (35 aa).

Residues 7-27 (GFIASILFVLVPTVFLLILFI) form a helical membrane-spanning segment.

This sequence belongs to the PsbM family. In terms of assembly, PSII is composed of 1 copy each of membrane proteins PsbA, PsbB, PsbC, PsbD, PsbE, PsbF, PsbH, PsbI, PsbJ, PsbK, PsbL, PsbM, PsbT, PsbX, PsbY, PsbZ, Psb30/Ycf12, peripheral proteins PsbO, CyanoQ (PsbQ), PsbU, PsbV and a large number of cofactors. It forms dimeric complexes.

It is found in the cellular thylakoid membrane. One of the components of the core complex of photosystem II (PSII). PSII is a light-driven water:plastoquinone oxidoreductase that uses light energy to abstract electrons from H(2)O, generating O(2) and a proton gradient subsequently used for ATP formation. It consists of a core antenna complex that captures photons, and an electron transfer chain that converts photonic excitation into a charge separation. This subunit is found at the monomer-monomer interface. This is Photosystem II reaction center protein M from Microcystis aeruginosa (strain NIES-843 / IAM M-2473).